Here is a 308-residue protein sequence, read N- to C-terminus: ADP-L-glycero-D-manno-heptose-6-epimerase (308 aa).

NADP(+) is bound by residues 10–11 (FI), 31–32 (DN), lysine 38, lysine 53, 75–79 (EGACS), and asparagine 92. Catalysis depends on tyrosine 139, which acts as the Proton acceptor. Lysine 143 contacts NADP(+). A substrate-binding site is contributed by asparagine 168. Residues valine 169 and lysine 177 each coordinate NADP(+). Lysine 177 acts as the Proton acceptor in catalysis. Substrate-binding positions include serine 179, histidine 186, 200–203 (FAGS), arginine 208, and tyrosine 271.

It belongs to the NAD(P)-dependent epimerase/dehydratase family. HldD subfamily. In terms of assembly, homopentamer. NADP(+) serves as cofactor.

It carries out the reaction ADP-D-glycero-beta-D-manno-heptose = ADP-L-glycero-beta-D-manno-heptose. It functions in the pathway nucleotide-sugar biosynthesis; ADP-L-glycero-beta-D-manno-heptose biosynthesis; ADP-L-glycero-beta-D-manno-heptose from D-glycero-beta-D-manno-heptose 7-phosphate: step 4/4. Functionally, catalyzes the interconversion between ADP-D-glycero-beta-D-manno-heptose and ADP-L-glycero-beta-D-manno-heptose via an epimerization at carbon 6 of the heptose. The chain is ADP-L-glycero-D-manno-heptose-6-epimerase from Haemophilus influenzae (strain PittGG).